The primary structure comprises 806 residues: U3 small nucleolar RNA-associated protein 17 (806 aa).

WD repeat units follow at residues tryptophan 266–leucine 305, arginine 448–valine 489, glycine 499–lysine 538, and proline 598–threonine 635.

Component of the ribosomal small subunit (SSU) processome.

The protein resides in the nucleus. It is found in the nucleolus. Functionally, involved in nucleolar processing of pre-18S ribosomal RNA. Required for optimal pre-ribosomal RNA transcription by RNA polymerase I together with a subset of U3 proteins required for transcription (t-UTPs). The sequence is that of U3 small nucleolar RNA-associated protein 17 (utp17) from Schizosaccharomyces pombe (strain 972 / ATCC 24843) (Fission yeast).